The primary structure comprises 146 residues: Large ribosomal subunit protein uL15 (146 aa).

The segment at 1-57 (MKLFELQPAPGSKKLPKRKGRGHGTGNGKTAGRGHKGQNARSGGGVRPGFEGGQMPL) is disordered. The span at 42–52 (SGGGVRPGFEG) shows a compositional bias: gly residues.

Belongs to the universal ribosomal protein uL15 family. As to quaternary structure, part of the 50S ribosomal subunit.

Its function is as follows. Binds to the 23S rRNA. The polypeptide is Large ribosomal subunit protein uL15 (Acetivibrio thermocellus (strain ATCC 27405 / DSM 1237 / JCM 9322 / NBRC 103400 / NCIMB 10682 / NRRL B-4536 / VPI 7372) (Clostridium thermocellum)).